A 302-amino-acid chain; its full sequence is Pyridoxal 5'-phosphate synthase subunit PdxS (302 aa).

Aspartate 32 serves as a coordination point for D-ribose 5-phosphate. Lysine 89 functions as the Schiff-base intermediate with D-ribose 5-phosphate in the catalytic mechanism. A D-ribose 5-phosphate-binding site is contributed by glycine 161. D-glyceraldehyde 3-phosphate is bound at residue arginine 173. D-ribose 5-phosphate-binding positions include glycine 222 and 243–244; that span reads GS. A disordered region spans residues 276–302; sequence ASNIGEGMQGDPNADLPEDERMQDRGN.

Belongs to the PdxS/SNZ family. In terms of assembly, in the presence of PdxT, forms a dodecamer of heterodimers.

The enzyme catalyses aldehydo-D-ribose 5-phosphate + D-glyceraldehyde 3-phosphate + L-glutamine = pyridoxal 5'-phosphate + L-glutamate + phosphate + 3 H2O + H(+). It functions in the pathway cofactor biosynthesis; pyridoxal 5'-phosphate biosynthesis. In terms of biological role, catalyzes the formation of pyridoxal 5'-phosphate from ribose 5-phosphate (RBP), glyceraldehyde 3-phosphate (G3P) and ammonia. The ammonia is provided by the PdxT subunit. Can also use ribulose 5-phosphate and dihydroxyacetone phosphate as substrates, resulting from enzyme-catalyzed isomerization of RBP and G3P, respectively. The sequence is that of Pyridoxal 5'-phosphate synthase subunit PdxS from Halobacterium salinarum (strain ATCC 29341 / DSM 671 / R1).